The primary structure comprises 161 residues: Small ribosomal subunit protein uS19 (161 aa).

Positions 1 to 19 are enriched in basic residues; that stretch reads MARQKKYSGKGGARKKNKQ. The segment at 1–26 is disordered; that stretch reads MARQKKYSGKGGARKKNKQKQNVAPR.

It belongs to the universal ribosomal protein uS19 family.

Functionally, protein S19 forms a complex with S13 that binds strongly to the 16S ribosomal RNA. The chain is Small ribosomal subunit protein uS19 from Methanococcus maripaludis (strain C5 / ATCC BAA-1333).